Here is a 702-residue protein sequence, read N- to C-terminus: Elongation factor G (702 aa).

The tr-type G domain occupies 8–290 (HRVRNIGIAA…AVAMYLPAPT (283 aa)). Residues 17 to 24 (AHIDAGKT), 87 to 91 (DTPGH), and 141 to 144 (NKMD) contribute to the GTP site.

The protein belongs to the TRAFAC class translation factor GTPase superfamily. Classic translation factor GTPase family. EF-G/EF-2 subfamily.

It is found in the cytoplasm. Catalyzes the GTP-dependent ribosomal translocation step during translation elongation. During this step, the ribosome changes from the pre-translocational (PRE) to the post-translocational (POST) state as the newly formed A-site-bound peptidyl-tRNA and P-site-bound deacylated tRNA move to the P and E sites, respectively. Catalyzes the coordinated movement of the two tRNA molecules, the mRNA and conformational changes in the ribosome. This Aliarcobacter butzleri (strain RM4018) (Arcobacter butzleri) protein is Elongation factor G.